Here is a 300-residue protein sequence, read N- to C-terminus: Tyrosine recombinase XerC (300 aa).

Residues 4 to 90 (VALSLDVSRF…ALRSFFDWLV (87 aa)) enclose the Core-binding (CB) domain. The region spanning 111–290 (HLPKNIDVDD…DFQHLASVYD (180 aa)) is the Tyr recombinase domain. Active-site residues include R150, K174, H242, R245, and H268. Y277 functions as the O-(3'-phospho-DNA)-tyrosine intermediate in the catalytic mechanism.

It belongs to the 'phage' integrase family. XerC subfamily. Forms a cyclic heterotetrameric complex composed of two molecules of XerC and two molecules of XerD, in which XerC interacts with XerD via its C-terminal region, XerD interacts with XerC via its C-terminal region and so on.

It localises to the cytoplasm. Its activity is regulated as follows. FtsK may regulate the catalytic switch between XerC and XerD in the heterotetrameric complex during the two steps of the recombination process. In terms of biological role, site-specific tyrosine recombinase, which acts by catalyzing the cutting and rejoining of the recombining DNA molecules. Binds cooperatively to specific DNA consensus sequences that are separated from XerD binding sites by a short central region, forming the heterotetrameric XerC-XerD complex that recombines DNA substrates. The complex is essential to convert dimers of the bacterial chromosome into monomers to permit their segregation at cell division. It also contributes to the segregational stability of plasmids. In the complex XerC specifically exchanges the top DNA strands. The chain is Tyrosine recombinase XerC from Salmonella typhi.